A 118-amino-acid chain; its full sequence is Large ribosomal subunit protein uL24 (118 aa).

Belongs to the universal ribosomal protein uL24 family. As to quaternary structure, part of the 50S ribosomal subunit.

One of two assembly initiator proteins, it binds directly to the 5'-end of the 23S rRNA, where it nucleates assembly of the 50S subunit. Its function is as follows. One of the proteins that surrounds the polypeptide exit tunnel on the outside of the subunit. The sequence is that of Large ribosomal subunit protein uL24 from Prochlorococcus marinus (strain MIT 9303).